Reading from the N-terminus, the 249-residue chain is Triosephosphate isomerase (249 aa).

The substrate site is built by asparagine 12 and lysine 14. N6-acetyllysine is present on lysine 14. Serine 21 is modified (phosphoserine). Position 68 is a 3'-nitrotyrosine (tyrosine 68). At serine 80 the chain carries Phosphoserine. Catalysis depends on histidine 96, which acts as the Electrophile. Serine 106 bears the Phosphoserine mark. Lysine 142 is covalently cross-linked (Glycyl lysine isopeptide (Lys-Gly) (interchain with G-Cter in SUMO1)). The residue at position 149 (lysine 149) is an N6-succinyllysine. Lysine 156 carries the N6-acetyllysine; alternate modification. Lysine 156 is subject to N6-succinyllysine; alternate. Serine 159 carries the post-translational modification Phosphoserine. Glutamate 166 (proton acceptor) is an active-site residue. Phosphothreonine is present on threonine 173. The residue at position 194 (lysine 194) is an N6-acetyllysine; alternate. The residue at position 194 (lysine 194) is an N6-succinyllysine; alternate. Lysine 194 bears the N6-methyllysine; alternate mark. A Phosphoserine modification is found at serine 198. Tyrosine 209 carries the 3'-nitrotyrosine modification. Serine 212 carries the post-translational modification Phosphoserine. Threonine 214 is modified (phosphothreonine). Serine 223 is subject to Phosphoserine. Lysine 238 is subject to N6-acetyllysine.

The protein belongs to the triosephosphate isomerase family. In terms of assembly, homodimer.

It localises to the cytoplasm. It carries out the reaction D-glyceraldehyde 3-phosphate = dihydroxyacetone phosphate. It catalyses the reaction dihydroxyacetone phosphate = methylglyoxal + phosphate. Its pathway is carbohydrate degradation; glycolysis; D-glyceraldehyde 3-phosphate from glycerone phosphate: step 1/1. It participates in carbohydrate biosynthesis; gluconeogenesis. Functionally, triosephosphate isomerase is an extremely efficient metabolic enzyme that catalyzes the interconversion between dihydroxyacetone phosphate (DHAP) and D-glyceraldehyde-3-phosphate (G3P) in glycolysis and gluconeogenesis. It is also responsible for the non-negligible production of methylglyoxal a reactive cytotoxic side-product that modifies and can alter proteins, DNA and lipids. This is Triosephosphate isomerase (TPI1) from Homo sapiens (Human).